Consider the following 307-residue polypeptide: Putative serine/threonine-protein phosphatase C22H10.04 (307 aa).

Positions 51, 53, 79, and 111 each coordinate Mn(2+). The active-site Proton donor is the His112. Positions 161 and 236 each coordinate Mn(2+).

The protein belongs to the PPP phosphatase family. PP-X subfamily. Mn(2+) is required as a cofactor.

The enzyme catalyses O-phospho-L-seryl-[protein] + H2O = L-seryl-[protein] + phosphate. It carries out the reaction O-phospho-L-threonyl-[protein] + H2O = L-threonyl-[protein] + phosphate. In Schizosaccharomyces pombe (strain 972 / ATCC 24843) (Fission yeast), this protein is Putative serine/threonine-protein phosphatase C22H10.04.